Reading from the N-terminus, the 351-residue chain is Putative [LysW]-L-2-aminoadipate/[LysW]-L-glutamate phosphate reductase (351 aa).

NADP(+) contacts are provided by residues 10-13 (SGFT) and 34-36 (SRK). Cysteine 151 is a catalytic residue. Position 318 (asparagine 318) interacts with NADP(+).

Belongs to the NAGSA dehydrogenase family. Type 1 subfamily. LysY sub-subfamily.

Its subcellular location is the cytoplasm. The catalysed reaction is [amino-group carrier protein]-C-terminal-N-(1-carboxy-5-oxopentan-1-yl)-L-glutamine + phosphate + NADP(+) = [amino-group carrier protein]-C-terminal-N-(1-carboxy-5-phosphooxy-5-oxopentan-1-yl)-L-glutamine + NADPH + H(+). It carries out the reaction [amino-group carrier protein]-C-terminal-gamma-(L-glutamyl-5-semialdehyde)-L-glutamate + phosphate + NADP(+) = [amino-group carrier protein]-C-terminal-gamma-(5-phospho-L-glutamyl)-L-glutamate + NADPH + H(+). It functions in the pathway amino-acid biosynthesis; L-lysine biosynthesis via AAA pathway; L-lysine from L-alpha-aminoadipate (Thermus route): step 3/5. It participates in amino-acid biosynthesis; L-arginine biosynthesis. In terms of biological role, involved in both the arginine and lysine biosynthetic pathways. The sequence is that of Putative [LysW]-L-2-aminoadipate/[LysW]-L-glutamate phosphate reductase from Pyrobaculum calidifontis (strain DSM 21063 / JCM 11548 / VA1).